The chain runs to 462 residues: Receptor like protein 29 (462 aa).

The signal sequence occupies residues 1 to 26 (MTMKRALPSPSSLLFFFLLITPLFLC). At 27–441 (QENRVSASMP…SQASRYYRSC (415 aa)) the chain is on the extracellular side. N139 carries an N-linked (GlcNAc...) asparagine glycan. LRR repeat units follow at residues 139–164 (NSSL…ISSL), 165–188 (KSLQ…IFSL), 190–212 (SLVH…LGNL), 213–236 (NNLV…ISQL), 238–260 (MLQK…VEKL), 261–284 (RSLS…ISNL), 286–308 (SLQY…LGFL), 309–331 (PKLQ…SYTK), 332–355 (LTNL…GFES), and 357–381 (PHVF…SFLR). N-linked (GlcNAc...) asparagine glycans are attached at residues N334, N363, and N416. Residues 442–462 (FFANALFPFALFLGLHQRWVL) traverse the membrane as a helical segment.

It belongs to the RLP family.

Its subcellular location is the cell membrane. This Arabidopsis thaliana (Mouse-ear cress) protein is Receptor like protein 29.